We begin with the raw amino-acid sequence, 161 residues long: Large ribosomal subunit protein uL15 (161 aa).

The segment at 1–43 is disordered; the sequence is MKLSDIADNAGARKKRMRVGRGIGSGKGKTSGRGGKGQTARSG. Positions 21–37 are enriched in gly residues; sequence RGIGSGKGKTSGRGGKG.

The protein belongs to the universal ribosomal protein uL15 family. As to quaternary structure, part of the 50S ribosomal subunit.

Its function is as follows. Binds to the 23S rRNA. The protein is Large ribosomal subunit protein uL15 of Bradyrhizobium sp. (strain BTAi1 / ATCC BAA-1182).